Here is a 245-residue protein sequence, read N- to C-terminus: Ribonuclease PH (245 aa).

Residues Arg-86 and 124-126 contribute to the phosphate site; that span reads GTR.

Belongs to the RNase PH family. As to quaternary structure, homohexameric ring arranged as a trimer of dimers.

The catalysed reaction is tRNA(n+1) + phosphate = tRNA(n) + a ribonucleoside 5'-diphosphate. Phosphorolytic 3'-5' exoribonuclease that plays an important role in tRNA 3'-end maturation. Removes nucleotide residues following the 3'-CCA terminus of tRNAs; can also add nucleotides to the ends of RNA molecules by using nucleoside diphosphates as substrates, but this may not be physiologically important. Probably plays a role in initiation of 16S rRNA degradation (leading to ribosome degradation) during starvation. The sequence is that of Ribonuclease PH from Bacillus cereus (strain G9842).